A 1086-amino-acid chain; its full sequence is DNA polymerase delta catalytic subunit (1086 aa).

A disordered region spans residues 1–64; sequence MTDRSSNEGV…KTSSFEDELA (64 aa). Basic and acidic residues predominate over residues 29–58; it reads EITDVKRRRLSERNGYGDKKGSSSKEKTSS. Cysteine 993, cysteine 996, cysteine 1008, and cysteine 1011 together coordinate Zn(2+). The segment at 993-1011 adopts a CysA-type zinc-finger fold; sequence CLGCKAPIKKGKTALCENC. Residues cysteine 1040, cysteine 1043, cysteine 1053, and cysteine 1058 each contribute to the [4Fe-4S] cluster site. Positions 1040 to 1058 match the CysB motif motif; that stretch reads CQRCQGSMHQDVICTSRDC.

The protein belongs to the DNA polymerase type-B family. In terms of assembly, heterotetramer that consist of the pol3, cdc1, cdc27 and cdm1 subunits. The pol3 subunit contains the polymerase active site and most likely the active site for the 3'-5' exonuclease activity. It depends on [4Fe-4S] cluster as a cofactor.

The protein localises to the nucleus. The enzyme catalyses DNA(n) + a 2'-deoxyribonucleoside 5'-triphosphate = DNA(n+1) + diphosphate. In terms of biological role, catalytic component of DNA polymerase delta (DNA polymerase III) which participates in chromosomal DNA replication. Required during synthesis of the lagging DNA strands at the replication fork, binds at/or near replication origins and moves along DNA with the replication fork. Participates in leading strand synthesis during replication initiation and termination. Has 3'-5' proofreading exonuclease activity that corrects errors arising during DNA replication. The protein is DNA polymerase delta catalytic subunit (pol3) of Schizosaccharomyces pombe (strain 972 / ATCC 24843) (Fission yeast).